The sequence spans 584 residues: Sulfite reductase [NADPH] hemoprotein beta-component (584 aa).

Residues cysteine 447, cysteine 453, cysteine 492, and cysteine 496 each coordinate [4Fe-4S] cluster. Cysteine 496 is a binding site for siroheme.

Belongs to the nitrite and sulfite reductase 4Fe-4S domain family. As to quaternary structure, alpha(8)-beta(8). The alpha component is a flavoprotein, the beta component is a hemoprotein. Siroheme serves as cofactor. The cofactor is [4Fe-4S] cluster.

The catalysed reaction is hydrogen sulfide + 3 NADP(+) + 3 H2O = sulfite + 3 NADPH + 4 H(+). Its pathway is sulfur metabolism; hydrogen sulfide biosynthesis; hydrogen sulfide from sulfite (NADPH route): step 1/1. Its function is as follows. Component of the sulfite reductase complex that catalyzes the 6-electron reduction of sulfite to sulfide. This is one of several activities required for the biosynthesis of L-cysteine from sulfate. The sequence is that of Sulfite reductase [NADPH] hemoprotein beta-component from Colwellia psychrerythraea (strain 34H / ATCC BAA-681) (Vibrio psychroerythus).